Here is a 118-residue protein sequence, read N- to C-terminus: Protein Rev (118 aa).

A phosphoserine; by host CK2 mark is found at Ser5 and Ser8. The segment at 18 to 28 is homomultimerization; that stretch reads LIKFLYQSSSD. Residues 23–52 are disordered; it reads YQSSSDPPPNPGGTRQARRNRRRRWRERQR. A Nuclear localization signal and RNA-binding (RRE) motif is present at residues 36-52; sequence TRQARRNRRRRWRERQR. Residues 38–49 show a composition bias toward basic residues; that stretch reads QARRNRRRRWRE. The Nuclear export signal and binding to XPO1 signature appears at 75–86; sequence LQLPPLERLTLD. Residues 92-118 are disordered; the sequence is GTSGTQGVGSPQILVESPTVLESGTKE. Phosphoserine; by host occurs at positions 94 and 101.

It belongs to the HIV-1 REV protein family. Homomultimer; when bound to the RRE. Multimeric assembly is essential for activity and may involve XPO1. Binds to human KPNB1, XPO1, TNPO1, RANBP5 and IPO7. Interacts with the viral Integrase. Interacts with human KHDRBS1. Interacts with human NAP1; this interaction decreases Rev multimerization and stimulates its activity. Interacts with human DEAD-box helicases DDX3 and DDX24; these interactions may serve for viral RNA export to the cytoplasm and packaging, respectively. Interacts with human PSIP1; this interaction may inhibit HIV-1 DNA integration by promoting dissociation of the Integrase-LEDGF/p75 complex. Post-translationally, asymmetrically arginine dimethylated at one site by host PRMT6. Methylation impairs the RNA-binding activity and export of viral RNA from the nucleus to the cytoplasm. Phosphorylated by protein kinase CK2. Presence of, and maybe binding to the N-terminus of the regulatory beta subunit of CK2 is necessary for CK2-mediated Rev's phosphorylation.

It localises to the host nucleus. The protein localises to the host nucleolus. The protein resides in the host cytoplasm. In terms of biological role, escorts unspliced or incompletely spliced viral pre-mRNAs (late transcripts) out of the nucleus of infected cells. These pre-mRNAs carry a recognition sequence called Rev responsive element (RRE) located in the env gene, that is not present in fully spliced viral mRNAs (early transcripts). This function is essential since most viral proteins are translated from unspliced or partially spliced pre-mRNAs which cannot exit the nucleus by the pathway used by fully processed cellular mRNAs. Rev itself is translated from a fully spliced mRNA that readily exits the nucleus. Rev's nuclear localization signal (NLS) binds directly to KPNB1/Importin beta-1 without previous binding to KPNA1/Importin alpha-1. KPNB1 binds to the GDP bound form of RAN (Ran-GDP) and targets Rev to the nucleus. In the nucleus, the conversion from Ran-GDP to Ran-GTP dissociates Rev from KPNB1 and allows Rev's binding to the RRE in viral pre-mRNAs. Rev multimerization on the RRE via cooperative assembly exposes its nuclear export signal (NES) to the surface. Rev can then form a complex with XPO1/CRM1 and Ran-GTP, leading to nuclear export of the complex. Conversion from Ran-GTP to Ran-GDP mediates dissociation of the Rev/RRE/XPO1/RAN complex, so that Rev can return to the nucleus for a subsequent round of export. Beside KPNB1, also seems to interact with TNPO1/Transportin-1, RANBP5/IPO5 and IPO7/RANBP7 for nuclear import. The nucleoporin-like HRB/RIP is an essential cofactor that probably indirectly interacts with Rev to release HIV RNAs from the perinuclear region to the cytoplasm. This chain is Protein Rev, found in Human immunodeficiency virus type 1 group M subtype B (isolate LW123) (HIV-1).